Here is a 141-residue protein sequence, read N- to C-terminus: Hemoglobin subunit alpha (141 aa).

The Globin domain occupies 1 to 141 (VLSAADKGNV…VSTVLTSKYR (141 aa)). A Phosphoserine modification is found at S3. Residues K7 and K11 each carry the N6-succinyllysine modification. K16 carries the post-translational modification N6-acetyllysine; alternate. An N6-succinyllysine; alternate modification is found at K16. At Y24 the chain carries Phosphotyrosine. Residue S35 is modified to Phosphoserine. At K40 the chain carries N6-succinyllysine. H58 lines the O2 pocket. H87 lines the heme b pocket. S102 bears the Phosphoserine mark. Phosphothreonine is present on T108. Phosphoserine is present on residues S124 and S131. Residues T134 and T137 each carry the phosphothreonine modification. S138 is subject to Phosphoserine.

The protein belongs to the globin family. As to quaternary structure, heterotetramer of two alpha chains and two beta chains. In terms of tissue distribution, red blood cells.

Its function is as follows. Involved in oxygen transport from the lung to the various peripheral tissues. In terms of biological role, hemopressin acts as an antagonist peptide of the cannabinoid receptor CNR1. Hemopressin-binding efficiently blocks cannabinoid receptor CNR1 and subsequent signaling. The protein is Hemoglobin subunit alpha (HBA) of Macrotus californicus (Californian leaf-nosed bat).